The following is a 64-amino-acid chain: Beta-defensin 2 (64 aa).

The signal sequence occupies residues 1–22 (MRLHHLLLVLFFVVLSAGSGFT). 3 disulfides stabilise this stretch: cysteine 31–cysteine 60, cysteine 38–cysteine 53, and cysteine 43–cysteine 61.

This sequence belongs to the beta-defensin family.

It localises to the secreted. Its function is as follows. Has bactericidal activity. The protein is Beta-defensin 2 (DEFB2) of Ovis aries (Sheep).